Here is a 127-residue protein sequence, read N- to C-terminus: Protein HI_1253 (127 aa).

4 helical membrane-spanning segments follow: residues 13 to 33 (VIML…LLVI), 61 to 81 (LIVS…WWLV), 82 to 102 (AKFA…SKKV), and 107 to 127 (SIFF…AYLK).

Belongs to the SirB2 family.

Its subcellular location is the cell inner membrane. The protein is Protein HI_1253 of Haemophilus influenzae (strain ATCC 51907 / DSM 11121 / KW20 / Rd).